Consider the following 388-residue polypeptide: Oxytocin receptor (388 aa).

Positions 1–32 are disordered; the sequence is MEGTPAANWSVELDLGSGVPPGEEGNRTAGPP. Over 1 to 38 the chain is Extracellular; sequence MEGTPAANWSVELDLGSGVPPGEEGNRTAGPPQRNEAL. Asparagine 8 and asparagine 26 each carry an N-linked (GlcNAc...) asparagine glycan. The helical transmembrane segment at 39 to 63 threads the bilayer; it reads ARVEVAVLCLILFLALSGNACVLLA. Over 64 to 74 the chain is Cytoplasmic; the sequence is LRTTRHKHSRL. The helical transmembrane segment at 75–97 threads the bilayer; that stretch reads FFFMKHLSIADLVVAVFQVLPQL. The Extracellular segment spans residues 98 to 113; sequence LWDITFRFYGPDLLCR. A disulfide bridge links cysteine 112 with cysteine 187. The chain crosses the membrane as a helical span at residues 114 to 135; sequence LVKYLQVVGMFASTYLLLLMSL. The Cytoplasmic portion of the chain corresponds to 136-154; sequence DRCLAICQPLRSLRRRTDR. The chain crosses the membrane as a helical span at residues 155–175; that stretch reads LAVLGTWLGCLVASAPQVHIF. The Extracellular segment spans residues 176 to 202; it reads SLREVADGVFDCWAVFIQPWGPKAYVT. A helical transmembrane segment spans residues 203-225; the sequence is WITLAVYIVPVIVLAACYGLISF. At 226–274 the chain is on the cytoplasmic side; sequence KIWQNLRLKTAAAAAAAEGNDAAGGAGRAALARVSSVKLISKAKIRTVK. A helical membrane pass occupies residues 275–293; sequence MTFIIVLAFIVCWTPFFFV. Over 294–308 the chain is Extracellular; the sequence is QMWSVWDVNAPKEAS. A helical transmembrane segment spans residues 309 to 331; the sequence is AFIIAMLLASLNSCCNPWIYMLF. At 332 to 388 the chain is on the cytoplasmic side; that stretch reads TGHLFHELVQRFFCCSARYLKGSRPGETSVSKKSNSSTFVLSRRSSSQRSCSQPSSA. The interval 354–388 is disordered; that stretch reads SRPGETSVSKKSNSSTFVLSRRSSSQRSCSQPSSA. Phosphoserine occurs at positions 365 and 367. A compositionally biased stretch (low complexity) spans 365–388; that stretch reads SNSSTFVLSRRSSSQRSCSQPSSA.

It belongs to the G-protein coupled receptor 1 family. Vasopressin/oxytocin receptor subfamily.

The protein localises to the cell membrane. In terms of biological role, receptor for oxytocin. The activity of this receptor is mediated by G proteins which activate a phosphatidylinositol-calcium second messenger system. This is Oxytocin receptor (Oxtr) from Rattus norvegicus (Rat).